The sequence spans 116 residues: Iron-sulfur cluster insertion protein ErpA (116 aa).

Residues Cys44, Cys108, and Cys110 each coordinate iron-sulfur cluster.

It belongs to the HesB/IscA family. As to quaternary structure, homodimer. Iron-sulfur cluster is required as a cofactor.

Required for insertion of 4Fe-4S clusters for at least IspG. This is Iron-sulfur cluster insertion protein ErpA from Shewanella sp. (strain ANA-3).